A 430-amino-acid polypeptide reads, in one-letter code: Phosphomethylpyrimidine synthase (430 aa).

Residues asparagine 67, methionine 96, tyrosine 125, histidine 161, 183–185 (SRG), 224–227 (DALR), and glutamate 263 contribute to the substrate site. Histidine 267 is a binding site for Zn(2+). Tyrosine 290 contacts substrate. Histidine 331 lines the Zn(2+) pocket. The [4Fe-4S] cluster site is built by cysteine 406, cysteine 409, and cysteine 413.

The protein belongs to the ThiC family. As to quaternary structure, homodimer. It depends on [4Fe-4S] cluster as a cofactor.

The catalysed reaction is 5-amino-1-(5-phospho-beta-D-ribosyl)imidazole + S-adenosyl-L-methionine = 4-amino-2-methyl-5-(phosphooxymethyl)pyrimidine + CO + 5'-deoxyadenosine + formate + L-methionine + 3 H(+). The protein operates within cofactor biosynthesis; thiamine diphosphate biosynthesis. Its function is as follows. Catalyzes the synthesis of the hydroxymethylpyrimidine phosphate (HMP-P) moiety of thiamine from aminoimidazole ribotide (AIR) in a radical S-adenosyl-L-methionine (SAM)-dependent reaction. The chain is Phosphomethylpyrimidine synthase from Campylobacter jejuni subsp. doylei (strain ATCC BAA-1458 / RM4099 / 269.97).